Here is a 294-residue protein sequence, read N- to C-terminus: MHPRFQTAFAQLADNLQSALAPILADHHFPAMLTAEQVSTLKNTAGLDEDALAFALLPLAATCARTDLSHFNVGAIARGVSGNWYFGANMEFLGATMQQTVHAEQSAISHAWLRGEKGLAAVTVNYTPCGHCRQFMNELNSGLDLRIHLPGRAPHTLRDYLPDAFGPKDLEIKTLLMDEQDHGFTLTGDTLTQAAITAANKSHMPYSHSPSGVALECKDGRIFTGSYAENAAFNPTLPPLQGALNLLSLNGYDYADIQRAILAEKGDAALIQWDATAATLKALGCHNIDRVLLG.

2 consecutive CMP/dCMP-type deaminase domains span residues 48-168 and 186-294; these read DEDA…FGPK and LTGD…VLLG. A substrate-binding site is contributed by 89–91; it reads NME. Histidine 102 serves as a coordination point for Zn(2+). The Proton donor role is filled by glutamate 104. Residues cysteine 129 and cysteine 132 each coordinate Zn(2+).

Belongs to the cytidine and deoxycytidylate deaminase family. As to quaternary structure, homodimer. Requires Zn(2+) as cofactor.

The catalysed reaction is cytidine + H2O + H(+) = uridine + NH4(+). The enzyme catalyses 2'-deoxycytidine + H2O + H(+) = 2'-deoxyuridine + NH4(+). Its function is as follows. This enzyme scavenges exogenous and endogenous cytidine and 2'-deoxycytidine for UMP synthesis. The polypeptide is Cytidine deaminase (Salmonella dublin (strain CT_02021853)).